The sequence spans 130 residues: Small ribosomal subunit protein uS9 (130 aa).

The protein belongs to the universal ribosomal protein uS9 family.

The protein is Small ribosomal subunit protein uS9 of Histophilus somni (strain 129Pt) (Haemophilus somnus).